Consider the following 345-residue polypeptide: MFHELKQSKDFLALTLAHPQYLSESFEFDLGEHTHVEVWDTGVIVFSPKQAKHSKDIVLSCAVHGNETAPIELCNALITQILSEELTLAQRVMFLIGNPAAIHNGTRFIDENLNRLFNGAHSRDEGLCNPERIRAHKLEQYVDRFYASQSGERQRIHYDLHTAIRGSKHEKFAIYPYRPGRKYSREQIMFLESCGVNTILFHHEPTTTFSYFSSENYRADAFTIELGKVFPMGQNDMTRFIAMKEMLTLLMTGKDLQLPEFDLKRLNLYQVCRSVNKHFDDFEFNFTNDVENFTAFPKGYTLAKEGGKAVKIEHEFESIVFPNAKVPVGQRTVLMLKTADDSNLD.

Zn(2+)-binding residues include H64, E67, and H161. E225 is an active-site residue.

The protein belongs to the AspA/AstE family. Succinylglutamate desuccinylase subfamily. The cofactor is Zn(2+).

The catalysed reaction is N-succinyl-L-glutamate + H2O = L-glutamate + succinate. The protein operates within amino-acid degradation; L-arginine degradation via AST pathway; L-glutamate and succinate from L-arginine: step 5/5. In terms of biological role, transforms N(2)-succinylglutamate into succinate and glutamate. This chain is Succinylglutamate desuccinylase, found in Shewanella piezotolerans (strain WP3 / JCM 13877).